Here is a 174-residue protein sequence, read N- to C-terminus: UPF0336 protein MAP_3996c (174 aa).

In terms of domain architecture, MaoC-like spans 11 to 131; the sequence is IGSHYRAPDY…VLAEIRSEVT (121 aa).

Belongs to the UPF0336 family.

This Mycolicibacterium paratuberculosis (strain ATCC BAA-968 / K-10) (Mycobacterium paratuberculosis) protein is UPF0336 protein MAP_3996c.